A 773-amino-acid polypeptide reads, in one-letter code: Protein YhgF (773 aa).

One can recognise an S1 motif domain in the interval 651 to 720; it reads GMILEGAVTN…QRKRIALTMR (70 aa). Positions 721–773 are disordered; sequence LDEQPGETNARRGGGNERPQNNRPAAKPRGREAQPAGNSAMMDALAAAMGKKR.

In Escherichia coli (strain K12), this protein is Protein YhgF (yhgF).